A 207-amino-acid chain; its full sequence is Small ribosomal subunit protein uS4 (207 aa).

The S4 RNA-binding domain maps to 96 to 156 (SRLDNVVYRM…KKSHNQSRIY (61 aa)).

It belongs to the universal ribosomal protein uS4 family. Part of the 30S ribosomal subunit. Contacts protein S5. The interaction surface between S4 and S5 is involved in control of translational fidelity.

Its function is as follows. One of the primary rRNA binding proteins, it binds directly to 16S rRNA where it nucleates assembly of the body of the 30S subunit. With S5 and S12 plays an important role in translational accuracy. This is Small ribosomal subunit protein uS4 from Blochmanniella floridana.